A 497-amino-acid polypeptide reads, in one-letter code: Galactose/methyl galactoside import ATP-binding protein MglA 1 (497 aa).

ABC transporter domains follow at residues 6–243 and 256–494; these read LEMR…VGRD and GKVR…VMSM. 38–45 contacts ATP; that stretch reads GENGAGKS.

It belongs to the ABC transporter superfamily. Galactose/methyl galactoside importer (TC 3.A.1.2.3) family. The complex is composed of one ATP-binding protein (MglA), two transmembrane proteins (MglC) and a solute-binding protein (MglB).

The protein resides in the cell inner membrane. It carries out the reaction D-galactose(out) + ATP + H2O = D-galactose(in) + ADP + phosphate + H(+). The enzyme catalyses methyl beta-D-galactoside(out) + ATP + H2O = methyl beta-D-galactoside(in) + ADP + phosphate + H(+). Functionally, part of the ABC transporter complex MglABC involved in galactose/methyl galactoside import. Responsible for energy coupling to the transport system. This is Galactose/methyl galactoside import ATP-binding protein MglA 1 from Photobacterium profundum (strain SS9).